The following is a 303-amino-acid chain: Probable 5-dehydro-4-deoxyglucarate dehydratase (303 aa).

It belongs to the DapA family.

It catalyses the reaction 5-dehydro-4-deoxy-D-glucarate + H(+) = 2,5-dioxopentanoate + CO2 + H2O. It functions in the pathway carbohydrate acid metabolism; D-glucarate degradation; 2,5-dioxopentanoate from D-glucarate: step 2/2. The polypeptide is Probable 5-dehydro-4-deoxyglucarate dehydratase (Pseudomonas savastanoi pv. phaseolicola (strain 1448A / Race 6) (Pseudomonas syringae pv. phaseolicola (strain 1448A / Race 6))).